We begin with the raw amino-acid sequence, 613 residues long: UvrABC system protein C (613 aa).

Positions 12–89 constitute a GIY-YIG domain; it reads DHPGVYIMHD…IKQHRPRYNV (78 aa). A UVR domain is found at 199–234; that stretch reads TALVKELKEQMEAAAARLEFEKAARLRDQLRAVQEV.

It belongs to the UvrC family. Interacts with UvrB in an incision complex.

It localises to the cytoplasm. In terms of biological role, the UvrABC repair system catalyzes the recognition and processing of DNA lesions. UvrC both incises the 5' and 3' sides of the lesion. The N-terminal half is responsible for the 3' incision and the C-terminal half is responsible for the 5' incision. In Moorella thermoacetica (strain ATCC 39073 / JCM 9320), this protein is UvrABC system protein C.